A 278-amino-acid chain; its full sequence is Large ribosomal subunit protein uL2c (278 aa).

Disordered regions lie at residues 32–56 (SLTS…HRGG) and 203–256 (QSIG…PTIG). Over residues 209–220 (GSKRWQGKRPKV) the composition is skewed to basic residues.

Belongs to the universal ribosomal protein uL2 family. Part of the 50S ribosomal subunit.

It is found in the plastid. It localises to the chloroplast. In Chara vulgaris (Common stonewort), this protein is Large ribosomal subunit protein uL2c (rpl2).